The following is a 481-amino-acid chain: Guanine nucleotide exchange factor C9orf72 homolog (481 aa).

Residues Ser23–Ser194 enclose the uDENN C9ORF72-type domain. Residues Asp200–Thr343 enclose the cDENN C9ORF72-type domain. The region spanning Val370–Phe464 is the dDENN C9ORF72-type domain. The interval Ser461 to Phe481 is required for the homodimerization of the C9orf72-SMCR8 complex.

As to quaternary structure, component of the C9orf72-SMCR8 complex, at least composed of C9orf72, SMCR8 and WDR41. The complex is formed of two protomers, each individually consisting of one molecule each of C9orf72, SMCR8 and WDR41. The protomers homodimerize via an interaction between C9orf72 (via C-terminus) and SMCR8 (via N-terminus). Within each protomer SMCR8 (via DENN domain) acts as a bridging protein between WDR41 (via C-terminus and N-terminus) and C9orf72 (via C-terminus). The C9orf72-SMCR8 complex associates with the ULK1/ATG1 kinase complex. Interacts with ULK1/ATG1 kinase complex members ULK1, ATG13 and RB1CC1. Interacts with SMCR8; the interaction is direct. Interacts with HNRNPA1, HNRNPA2B1 and UBQLN2. Interacts with small Rab GTPase RAB1A; the interaction mediates recruitment of RAB1A to the ULK1/ATG1 kinase complex. Also interacts with small Rab GTPase RAB7A. Interacts with cofilin. Interacts with GTP-binding proteins ARF1 and ARF6. Interacts with the DLG4/PSD-95. Interacts with CARM1 (via PH domain-like fold). Interacts with RAB39A and RAB39B (in GDP-bound forms); functions as GEF for RAB39A and RAB39B. In terms of tissue distribution, expressed in postnatal cerebellum and cortex (at protein level). Neuronal expression is detected in several regions of the adult brain and spinal cord. Prominent expression also observed in embryonic and early postnatal neurons including retinal ganglion cells, sensory neurons in the olfactory epithelium and in dorsal root ganglia, and spinal motor neurons. Expressed in the developing cerebral cortex, cerebellum, olfactory bulb, hippocampus and spinal cord in the embryo and in P0 cortical neurons and astrocytes. Also expressed in non-neuronal tissues such as kidney and tooth. In the spleen, highly expressed in myeloid cells compared to B cell and T cell populations where expression is much lower. In the brain, highly expressed in microglia. As to expression, expressed in the forebrain, including in the glomerular layer of the olfactory bulb (at protein level).

It is found in the nucleus. Its subcellular location is the cytoplasm. It localises to the P-body. The protein resides in the stress granule. The protein localises to the endosome. It is found in the lysosome. Its subcellular location is the cytoplasmic vesicle. It localises to the autophagosome. The protein resides in the autolysosome. The protein localises to the secreted. It is found in the cell projection. Its subcellular location is the axon. It localises to the growth cone. The protein resides in the perikaryon. The protein localises to the dendrite. It is found in the presynapse. Its subcellular location is the postsynapse. In terms of biological role, acts as a guanine-nucleotide releasing factor (GEF) for Rab GTPases by promoting the conversion of inactive RAB-GDP to the active form RAB-GTP. Acts as a GEF for RAB39A which enables HOPS-mediated autophagosome-lysosome membrane tethering and fusion in mammalian autophagy. Component of the C9orf72-SMCR8 complex where both subunits display GEF activity and that regulates autophagy. As part of the C9orf72-SMCR8-WDR41 (CSW) complex, functions as GEF for RAB8A, and RAB39B, thereby promoting autophagosome maturation. As part of the C9orf72-SMCR8 complex, also functions as GTPase activating protein (GAP) for RAB8A and RAB11A in vitro. The C9orf72-SMCR8 complex also acts as a regulator of autophagy initiation by interacting with the ULK1/ATG1 kinase complex and modulating its protein kinase activity. Promotes initiation of autophagy by regulating the RAB1A-dependent trafficking of the ULK1/ATG1 kinase complex to the phagophore which leads to autophagosome formation. Acts as a regulator of mTORC1 signaling by promoting phosphorylation of mTORC1 substrates. Plays a role in endosomal trafficking. May be involved in regulating the maturation of phagosomes to lysosomes. Promotes the lysosomal localization and lysosome-mediated degradation of CARM1 which leads to inhibition of starvation-induced lipid metabolism. Regulates actin dynamics in motor neurons by inhibiting the GTP-binding activity of ARF6, leading to ARF6 inactivation. This reduces the activity of the LIMK1 and LIMK2 kinases which are responsible for phosphorylation and inactivation of CFL1/cofilin, leading to cofilin activation. Positively regulates axon extension and axon growth cone size in spinal motor neurons. Required for SMCR8 protein expression and localization at pre- and post-synaptic compartments in the forebrain, also regulates protein abundance of RAB3A and GRIA1/GLUR1 in post-synaptic compartments in the forebrain and hippocampus. Plays a role within the hematopoietic system in restricting inflammation and the development of autoimmunity. The polypeptide is Guanine nucleotide exchange factor C9orf72 homolog (Mus musculus (Mouse)).